Reading from the N-terminus, the 690-residue chain is MNSNFNQHFERIKELRALLNKANYSYYVLDSPEIDDAVYDQLYRELIEIENIHPSLITDDSPSQRLGGVPSKGFKNVEHNIPLLSLDNAFNLNELESWYGRISKLISSENKNIKKVDDLELICELKIDGNAISLRYENGILTRAATRGDGKTGEDITTNIRTISTIPLRLLLENPPSWVEIRGEAFMPNNIFNKLNIERKNTDQPLFANPRNSCAGTLRQLDPKIVASRKLDFFAYSLYFPENWEPTDNNFKKPISQSESLEFLKNIGFKVNTTYETTKTLNEANKYYKYWEVKKDFLAYATDGIVVKIDKFDIQNLLGATNKAPRWAIAVKYPAEEKATKLRKIIFQVGRSGAVTPVAEFESIELAGTSVNRATLHNAKRLASLDLHYEDTIIVRKAGEIIPEVIRVIKEFRKVDAKLVQLPQNCPECNSKLILESNEAITKCINYGCEAKLKGLLRHWVSKGSMNIDGLGEKIINQLVNEGYVKSIADLYKLEIDSLLELERFGEKSANNLLIEINESKNKNWHKQLYGLGIPHIGEANAKSLSNNFNSIEELNAIAKESPEKISNIYGFGNEMKDSIVKWFDDSNNQTLIKELKAIGFSLKESLDSNYNSNQSNVFDGKSFVLTGTLDSLTRDEAKELIESAGGKVSSSISKKTDFLVSGEKAGSKLNKAQELGVKIINENELKLLL.

NAD(+)-binding positions include 36–40, 85–86, and glutamate 124; these read DAVYD and SL. The active-site N6-AMP-lysine intermediate is the lysine 126. Positions 147, 184, 308, and 332 each coordinate NAD(+). Cysteine 426, cysteine 429, cysteine 444, and cysteine 449 together coordinate Zn(2+). A BRCT domain is found at 614 to 690; sequence NQSNVFDGKS…INENELKLLL (77 aa).

Belongs to the NAD-dependent DNA ligase family. LigA subfamily. It depends on Mg(2+) as a cofactor. Requires Mn(2+) as cofactor.

The catalysed reaction is NAD(+) + (deoxyribonucleotide)n-3'-hydroxyl + 5'-phospho-(deoxyribonucleotide)m = (deoxyribonucleotide)n+m + AMP + beta-nicotinamide D-nucleotide.. DNA ligase that catalyzes the formation of phosphodiester linkages between 5'-phosphoryl and 3'-hydroxyl groups in double-stranded DNA using NAD as a coenzyme and as the energy source for the reaction. It is essential for DNA replication and repair of damaged DNA. This Prochlorococcus marinus (strain NATL1A) protein is DNA ligase.